The primary structure comprises 331 residues: Tyrosine--tRNA ligase (331 aa).

Residues Tyr31, Tyr155, Gln159, Asp162, and Gln177 each coordinate L-tyrosine. The 'KMSKS' region signature appears at 218 to 222 (KMSKS). Lys221 is a binding site for ATP.

The protein belongs to the class-I aminoacyl-tRNA synthetase family. TyrS type 4 subfamily. As to quaternary structure, homodimer.

It is found in the cytoplasm. The catalysed reaction is tRNA(Tyr) + L-tyrosine + ATP = L-tyrosyl-tRNA(Tyr) + AMP + diphosphate + H(+). Catalyzes the attachment of tyrosine to tRNA(Tyr) in a two-step reaction: tyrosine is first activated by ATP to form Tyr-AMP and then transferred to the acceptor end of tRNA(Tyr). The polypeptide is Tyrosine--tRNA ligase (Thermoplasma volcanium (strain ATCC 51530 / DSM 4299 / JCM 9571 / NBRC 15438 / GSS1)).